Consider the following 796-residue polypeptide: Volume-regulated anion channel subunit LRRC8E (796 aa).

Over 1–22 (MIPVAEFKQFTEQQPAFKVLKP) the chain is Cytoplasmic. A helical membrane pass occupies residues 23 to 43 (WWDVLAEYLTVAMLMIGVFGC). Topologically, residues 44-116 (TLQVTQDKII…YETALHWYAK (73 aa)) are extracellular. The cysteines at positions 54 and 301 are disulfide-linked. Asn63 carries an N-linked (GlcNAc...) asparagine glycan. A helical membrane pass occupies residues 117 to 137 (YFPYLVVIHTLIFMVCTSFWF). The Cytoplasmic portion of the chain corresponds to 138 to 265 (KFPGTSSKIE…IRQTVLKVCK (128 aa)). A helical transmembrane segment spans residues 266-286 (FLAILVYNLVYVEKISFLVAC). At 287 to 313 (RVETSEVTGYASFCCNHTKAHLFSKLA) the chain is on the extracellular side. Asn302 carries N-linked (GlcNAc...) asparagine glycosylation. Residues 314–334 (FCYISFVCIYGLTCIYTLYWL) traverse the membrane as a helical segment. Residues 335–796 (FHRPLKEYSF…AEVRDKMEEE (462 aa)) are Cytoplasmic-facing. 11 LRR repeats span residues 508–529 (GLEELHLEGLFPQELARAATLE), 536–557 (QLKVLSLRSNAGKVPASVTDVA), 559–579 (HLQRLSLHNDGARLVALNSLK), 583–604 (ALRELELVACGLERIPHAVFSL), 606–627 (ALQELDLKDNHLRSIEEILSFQ), 631–652 (KLVTLRLWHNQIAYVPEHVRKL), 654–675 (SLEQLYLSYNKLETLPSQLGLC), 677–698 (GLRLLDVSHNGLHSLPPEVGLL), 700–721 (NLQHLALSYNALEALPEELFFC), 723–744 (KLRTLLLGDNQLSQLSPHVGAL), and 746–767 (ALSRLELKGNRLEALPEELGNC).

This sequence belongs to the LRRC8 family. In terms of assembly, heterohexamer; oligomerizes with other LRRC8 proteins (LRRC8A, LRRC8C, LRRC8D and/or LRRC8B) to form a heterohexamer. In vivo, the subunit composition may depend primarily on expression levels, and heterooligomeric channels containing various proportions of the different LRRC8 proteins may coexist.

Its subcellular location is the cell membrane. It localises to the endoplasmic reticulum membrane. It is found in the lysosome membrane. It catalyses the reaction chloride(in) = chloride(out). The catalysed reaction is iodide(out) = iodide(in). It carries out the reaction taurine(out) = taurine(in). The enzyme catalyses 2',3'-cGAMP(out) = 2',3'-cGAMP(in). Non-essential component of the volume-regulated anion channel (VRAC, also named VSOAC channel), an anion channel required to maintain a constant cell volume in response to extracellular or intracellular osmotic changes. The VRAC channel conducts iodide better than chloride and can also conduct organic osmolytes like taurine. Mediates efflux of amino acids, such as aspartate, in response to osmotic stress. The VRAC channel also mediates transport of immunoreactive cyclic dinucleotide GMP-AMP (2'-3'-cGAMP), an immune messenger produced in response to DNA virus in the cytosol. Channel activity requires LRRC8A plus at least one other family member (LRRC8B, LRRC8C, LRRC8D or LRRC8E); channel characteristics depend on the precise subunit composition. Also plays a role in lysosome homeostasis by forming functional lysosomal VRAC channels in response to low cytoplasmic ionic strength condition: lysosomal VRAC channels are necessary for the formation of large lysosome-derived vacuoles, which store and then expel excess water to maintain cytosolic water homeostasis. This is Volume-regulated anion channel subunit LRRC8E from Homo sapiens (Human).